A 234-amino-acid polypeptide reads, in one-letter code: Leucyl/phenylalanyl-tRNA--protein transferase (234 aa).

Belongs to the L/F-transferase family.

The protein resides in the cytoplasm. It carries out the reaction N-terminal L-lysyl-[protein] + L-leucyl-tRNA(Leu) = N-terminal L-leucyl-L-lysyl-[protein] + tRNA(Leu) + H(+). It catalyses the reaction N-terminal L-arginyl-[protein] + L-leucyl-tRNA(Leu) = N-terminal L-leucyl-L-arginyl-[protein] + tRNA(Leu) + H(+). The enzyme catalyses L-phenylalanyl-tRNA(Phe) + an N-terminal L-alpha-aminoacyl-[protein] = an N-terminal L-phenylalanyl-L-alpha-aminoacyl-[protein] + tRNA(Phe). Functions in the N-end rule pathway of protein degradation where it conjugates Leu, Phe and, less efficiently, Met from aminoacyl-tRNAs to the N-termini of proteins containing an N-terminal arginine or lysine. This chain is Leucyl/phenylalanyl-tRNA--protein transferase, found in Shigella dysenteriae serotype 1 (strain Sd197).